Reading from the N-terminus, the 250-residue chain is Uracil-DNA glycosylase (250 aa).

Asp-78 acts as the Proton acceptor in catalysis. Positions 228 to 250 (RGQKPVDWSGEQNNASRQGKFAL) are disordered.

Belongs to the uracil-DNA glycosylase (UDG) superfamily. UNG family.

It is found in the cytoplasm. The enzyme catalyses Hydrolyzes single-stranded DNA or mismatched double-stranded DNA and polynucleotides, releasing free uracil.. In terms of biological role, excises uracil residues from the DNA which can arise as a result of misincorporation of dUMP residues by DNA polymerase or due to deamination of cytosine. The sequence is that of Uracil-DNA glycosylase from Bordetella bronchiseptica (strain ATCC BAA-588 / NCTC 13252 / RB50) (Alcaligenes bronchisepticus).